A 142-amino-acid chain; its full sequence is Hemoglobin subunit alpha-A (142 aa).

The Globin domain maps to 2–142 (VLSANDKTNV…VGNVLTAKYR (141 aa)). Histidine 59 provides a ligand contact to O2. Histidine 88 provides a ligand contact to heme b.

It belongs to the globin family. Heterotetramer of two alpha chains and two beta chains. As to expression, red blood cells.

In terms of biological role, involved in oxygen transport from the lung to the various peripheral tissues. In Aquila chrysaetos (Golden eagle), this protein is Hemoglobin subunit alpha-A (HBAA).